We begin with the raw amino-acid sequence, 297 residues long: Nucleotide-binding protein Bxeno_A0336 (297 aa).

Residue 8 to 15 coordinates ATP; it reads GISGSGKS. Residue 57-60 participates in GTP binding; the sequence is DARS.

The protein belongs to the RapZ-like family.

Its function is as follows. Displays ATPase and GTPase activities. This is Nucleotide-binding protein Bxeno_A0336 from Paraburkholderia xenovorans (strain LB400).